A 573-amino-acid chain; its full sequence is FAD-dependent monooxygenase resA (573 aa).

The signal sequence occupies residues 1 to 17 (MYDVIVIGAGWCGLVAA). An FAD-binding site is contributed by isoleucine 106. Asparagine 235 carries an N-linked (GlcNAc...) asparagine glycan.

The protein belongs to the FAD-binding monooxygenase family. It depends on FAD as a cofactor.

It functions in the pathway antifungal biosynthesis. Functionally, FAD-dependent monooxygenase; part of the gene cluster that mediates the biosynthesis of the tetrahydropyranyl antifungal agent restricticin that acts as an inhibitor of CYP51 and blocks the ergosterol biosynthesis. The highly reducing polyketide synthase resH, the short chain dehydrogenase resG, the cyclase resF, the FAD-dependent monooxygenase resA and the enoylreductase resD are required to generate the first stable intermediate desmethylrestrictinol. ResH with resD biosynthesize the first polyketide chain intermediate that is reduced by resG, followed by epoxidation by resA before 6-endo cyclization via epoxide opening by resF leads to desmethylrestrictinol. The methyltransferase resE then catalyzes the C4 O-methylation of desmethylrestrictinol to produce restrictinol, and the nonribosomal peptide synthetase resC catalyzes the C3 esterification of restrictinol with glycine that leads to restricticin. In Aspergillus sclerotiorum, this protein is FAD-dependent monooxygenase resA.